A 274-amino-acid chain; its full sequence is Rhamnulose-1-phosphate aldolase (274 aa).

The active site involves Glu-117. Residues His-141, His-143, and His-212 each coordinate Zn(2+).

Belongs to the aldolase class II family. RhaD subfamily. As to quaternary structure, homotetramer. Zn(2+) serves as cofactor.

It localises to the cytoplasm. It carries out the reaction L-rhamnulose 1-phosphate = (S)-lactaldehyde + dihydroxyacetone phosphate. Its pathway is carbohydrate degradation; L-rhamnose degradation; glycerone phosphate from L-rhamnose: step 3/3. Catalyzes the reversible cleavage of L-rhamnulose-1-phosphate to dihydroxyacetone phosphate (DHAP) and L-lactaldehyde. This is Rhamnulose-1-phosphate aldolase from Escherichia coli O81 (strain ED1a).